Here is a 92-residue protein sequence, read N- to C-terminus: YcgL domain-containing protein HS_0805 (92 aa).

The region spanning M1 to R85 is the YcgL domain.

The sequence is that of YcgL domain-containing protein HS_0805 from Histophilus somni (strain 129Pt) (Haemophilus somnus).